The sequence spans 444 residues: uncharacterized protein (444 aa).

The region spanning 164–381 (GAYGKSFLLE…EKALKKEGIR (218 aa)) is the Radical SAM core domain. [4Fe-4S] cluster-binding residues include Cys178, Cys182, and Cys185.

[4Fe-4S] cluster is required as a cofactor.

This is an uncharacterized protein from Methanocaldococcus jannaschii (strain ATCC 43067 / DSM 2661 / JAL-1 / JCM 10045 / NBRC 100440) (Methanococcus jannaschii).